Reading from the N-terminus, the 274-residue chain is 3-methyl-2-oxobutanoate hydroxymethyltransferase (274 aa).

The Mg(2+) site is built by D44 and D83. 3-methyl-2-oxobutanoate-binding positions include 44–45, D83, and K113; that span reads DS. E115 contacts Mg(2+). E182 serves as the catalytic Proton acceptor.

Belongs to the PanB family. Homodecamer; pentamer of dimers. Mg(2+) serves as cofactor.

Its subcellular location is the cytoplasm. The enzyme catalyses 3-methyl-2-oxobutanoate + (6R)-5,10-methylene-5,6,7,8-tetrahydrofolate + H2O = 2-dehydropantoate + (6S)-5,6,7,8-tetrahydrofolate. Its pathway is cofactor biosynthesis; (R)-pantothenate biosynthesis; (R)-pantoate from 3-methyl-2-oxobutanoate: step 1/2. Its function is as follows. Catalyzes the reversible reaction in which hydroxymethyl group from 5,10-methylenetetrahydrofolate is transferred onto alpha-ketoisovalerate to form ketopantoate. In Campylobacter jejuni subsp. doylei (strain ATCC BAA-1458 / RM4099 / 269.97), this protein is 3-methyl-2-oxobutanoate hydroxymethyltransferase.